A 305-amino-acid chain; its full sequence is Glycerol-3-phosphate dehydrogenase [NAD(P)+] (305 aa).

NADPH is bound by residues phenylalanine 10, arginine 29, and lysine 87. Residues lysine 87, glycine 115, and serine 117 each coordinate sn-glycerol 3-phosphate. NADPH is bound at residue alanine 119. Residues lysine 170, aspartate 223, serine 233, arginine 234, and asparagine 235 each contribute to the sn-glycerol 3-phosphate site. The Proton acceptor role is filled by lysine 170. Arginine 234 is an NADPH binding site. Glutamate 255 is a binding site for NADPH.

Belongs to the NAD-dependent glycerol-3-phosphate dehydrogenase family.

It localises to the cytoplasm. The catalysed reaction is sn-glycerol 3-phosphate + NAD(+) = dihydroxyacetone phosphate + NADH + H(+). It catalyses the reaction sn-glycerol 3-phosphate + NADP(+) = dihydroxyacetone phosphate + NADPH + H(+). The protein operates within membrane lipid metabolism; glycerophospholipid metabolism. Catalyzes the reduction of the glycolytic intermediate dihydroxyacetone phosphate (DHAP) to sn-glycerol 3-phosphate (G3P), the key precursor for phospholipid synthesis. This is Glycerol-3-phosphate dehydrogenase [NAD(P)+] from Cereibacter sphaeroides (strain ATCC 17023 / DSM 158 / JCM 6121 / CCUG 31486 / LMG 2827 / NBRC 12203 / NCIMB 8253 / ATH 2.4.1.) (Rhodobacter sphaeroides).